The following is a 787-amino-acid chain: Signal transducer and activator of transcription 5B (787 aa).

Tyr90 bears the Phosphotyrosine mark. Phosphoserine occurs at positions 128 and 193. Residues 232 to 321 are required for interaction with NMI; that stretch reads KHQKTLQLLR…MLAEVNATIT (90 aa). Residues 589–686 enclose the SH2 domain; the sequence is WNDGAILGFV…EVYSKYYTPV (98 aa). Tyr682 is subject to Phosphotyrosine. The residue at position 699 (Tyr699) is a Phosphotyrosine; by HCK, JAK and PTK6.

It belongs to the transcription factor STAT family. As to quaternary structure, upon activation, forms homodimers. Forms also heterodimers with related family members. Binds NR3C1. Interacts with NCOA1. Interacts with NMI. Interacts with SOCS7. Interacts (via SH2 domain) with INSR. Interacts with CPEB3; this inhibits STAT5B-mediated transcriptional activation. In terms of processing, tyrosine phosphorylated in response to signaling via activated KIT, resulting in translocation to the nucleus. Tyrosine phosphorylated in response to signaling via activated FLT3; wild-type FLT3 results in much weaker phosphorylation than constitutively activated mutant FLT3. Alternatively, can be phosphorylated by JAK2. Phosphorylation at Tyr-699 by PTK6 or HCK leads to an increase of its transcriptional activity.

Its subcellular location is the cytoplasm. The protein resides in the nucleus. Its function is as follows. Carries out a dual function: signal transduction and activation of transcription. Mediates cellular responses to the cytokine KITLG/SCF and other growth factors. Binds to the GAS element and activates PRL-induced transcription. Positively regulates hematopoietic/erythroid differentiation. The chain is Signal transducer and activator of transcription 5B (STAT5B) from Homo sapiens (Human).